Reading from the N-terminus, the 315-residue chain is Probable cell division protein WhiA (315 aa).

A DNA-binding region (H-T-H motif) is located at residues 277 to 311 (SLQELGAMMPSGQISKSGVNHRLRKLNQIAEGYQQ).

It belongs to the WhiA family.

Involved in cell division and chromosome segregation. In Lacticaseibacillus paracasei (strain ATCC 334 / BCRC 17002 / CCUG 31169 / CIP 107868 / KCTC 3260 / NRRL B-441) (Lactobacillus paracasei), this protein is Probable cell division protein WhiA.